Reading from the N-terminus, the 102-residue chain is ATP-dependent Clp protease adapter protein ClpS (102 aa).

This sequence belongs to the ClpS family. In terms of assembly, binds to the N-terminal domain of the chaperone ClpA.

Involved in the modulation of the specificity of the ClpAP-mediated ATP-dependent protein degradation. The polypeptide is ATP-dependent Clp protease adapter protein ClpS (Shewanella frigidimarina (strain NCIMB 400)).